The following is a 392-amino-acid chain: Cytochrome P450 monooxygenase ppzE (392 aa).

Residues 10–30 (LELVWFVALYPFACWTLFAVL) form a helical membrane-spanning segment. N319 carries N-linked (GlcNAc...) asparagine glycosylation. A heme-binding site is contributed by C353. An N-linked (GlcNAc...) asparagine glycan is attached at N372.

The protein belongs to the cytochrome P450 family. Heme is required as a cofactor.

It is found in the membrane. It functions in the pathway secondary metabolite biosynthesis. Cytochrome P450 monooxygenase; part of the gene cluster that mediates the biosynthesis of pyrrolopyrazines, secondary metabolites showing insecticidal activity. The role of ppzE within the pathway has still to be determined. The single multifunctional NRPS ppzA is sufficient to produce peramine via condensation of 1-pyrroline-5-carboxylate and arginine, N-methylation of the alpha-amino group of arginine and reduction of the thioester and the cyclization to form an iminium ion resulting in release from the peptide synthetase. Deprotonation of this intermediate and oxidation of the pyrroline ring would give rise to peramine. In Epichloe species that produce only peramine, the peramine synthetase gene is not localized in a gene cluster, in contrast to Metarhizium species that contain additional pyrrolopyrazine biosynthesis genes. The 2-oxoglutarate-Fe(II) type oxidoreductase ppzC hydroxylates peramine to yield the newly identified compound 8-hydroxyperamine whereas ppzD converts L-proline into trans-4-hydroxy-L-proline, a precursor of peramine biosynthesis. The polypeptide is Cytochrome P450 monooxygenase ppzE (Metarhizium rileyi (strain RCEF 4871) (Nomuraea rileyi)).